Here is a 120-residue protein sequence, read N- to C-terminus: uncharacterized protein (120 aa).

The helical transmembrane segment at 47 to 63 threads the bilayer; it reads VSIVIGLCTVLISAGAG.

The protein resides in the membrane. This is an uncharacterized protein from Sinorhizobium fredii (strain NBRC 101917 / NGR234).